The following is a 491-amino-acid chain: Leucine aminopeptidase 1 (491 aa).

Zn(2+) contacts are provided by lysine 252 and aspartate 257. Residue lysine 264 is part of the active site. Zn(2+) is bound by residues aspartate 275, aspartate 334, and glutamate 336. Arginine 338 is an active-site residue.

Belongs to the peptidase M17 family. Zn(2+) serves as cofactor. Expressed in the buccal cavity, pharynx, anterior gut and rectum.

It carries out the reaction Release of an N-terminal amino acid, Xaa-|-Yaa-, in which Xaa is preferably Leu, but may be other amino acids including Pro although not Arg or Lys, and Yaa may be Pro. Amino acid amides and methyl esters are also readily hydrolyzed, but rates on arylamides are exceedingly low.. Its function is as follows. Probably acts as a digestive enzyme. The polypeptide is Leucine aminopeptidase 1 (lap-1) (Caenorhabditis elegans).